We begin with the raw amino-acid sequence, 611 residues long: Phosphoenolpyruvate carboxykinase [GTP] (611 aa).

Residues Arg82 and 222 to 224 (YGG) contribute to the substrate site. Positions 231 and 251 each coordinate Mn(2+). Ser273 serves as a coordination point for substrate. 274–279 (ACGKTN) lines the GTP pocket. Cys275 is a catalytic residue. A Mn(2+)-binding site is contributed by Asp298. 389 to 391 (NSR) contacts substrate. GTP is bound by residues Arg391, Arg422, and 517–520 (FGDN).

Belongs to the phosphoenolpyruvate carboxykinase [GTP] family. As to quaternary structure, monomer. Requires Mn(2+) as cofactor.

The protein localises to the cytoplasm. It carries out the reaction oxaloacetate + GTP = phosphoenolpyruvate + GDP + CO2. It participates in carbohydrate biosynthesis; gluconeogenesis. Functionally, catalyzes the conversion of oxaloacetate (OAA) to phosphoenolpyruvate (PEP), the rate-limiting step in the metabolic pathway that produces glucose from lactate and other precursors derived from the citric acid cycle. The protein is Phosphoenolpyruvate carboxykinase [GTP] of Arthrobacter sp. (strain FB24).